We begin with the raw amino-acid sequence, 526 residues long: Peptide chain release factor 3 (526 aa).

Residues 9–277 (DKRRTFAIIS…GIVEWAPKPQ (269 aa)) form the tr-type G domain. Residues 18-25 (SHPDAGKT), 86-90 (DTPGH), and 140-143 (NKLD) each bind GTP.

Belongs to the TRAFAC class translation factor GTPase superfamily. Classic translation factor GTPase family. PrfC subfamily.

The protein localises to the cytoplasm. Its function is as follows. Increases the formation of ribosomal termination complexes and stimulates activities of RF-1 and RF-2. It binds guanine nucleotides and has strong preference for UGA stop codons. It may interact directly with the ribosome. The stimulation of RF-1 and RF-2 is significantly reduced by GTP and GDP, but not by GMP. This is Peptide chain release factor 3 from Shewanella sediminis (strain HAW-EB3).